A 146-amino-acid polypeptide reads, in one-letter code: Large ribosomal subunit protein uL15 (146 aa).

The disordered stretch occupies residues 1–57 (MKLHELKPAQGSRKTRNRVGRGSSSGNGKTAGRGQKGQKARSGGNIRSGFEGGQTPL). A compositionally biased stretch (gly residues) spans 23 to 35 (SSSGNGKTAGRGQ).

Belongs to the universal ribosomal protein uL15 family. In terms of assembly, part of the 50S ribosomal subunit.

Binds to the 23S rRNA. The sequence is that of Large ribosomal subunit protein uL15 from Streptococcus mutans serotype c (strain ATCC 700610 / UA159).